The primary structure comprises 404 residues: Cysteine desulfurase IscS (404 aa).

Residues 75-76 (AT), N155, Q183, and 203-205 (SAH) each bind pyridoxal 5'-phosphate. The residue at position 206 (K206) is an N6-(pyridoxal phosphate)lysine. A pyridoxal 5'-phosphate-binding site is contributed by T243. The active-site Cysteine persulfide intermediate is C328. C328 provides a ligand contact to [2Fe-2S] cluster.

The protein belongs to the class-V pyridoxal-phosphate-dependent aminotransferase family. NifS/IscS subfamily. Homodimer. Forms a heterotetramer with IscU, interacts with other sulfur acceptors. It depends on pyridoxal 5'-phosphate as a cofactor.

The protein resides in the cytoplasm. The catalysed reaction is (sulfur carrier)-H + L-cysteine = (sulfur carrier)-SH + L-alanine. It participates in cofactor biosynthesis; iron-sulfur cluster biosynthesis. Master enzyme that delivers sulfur to a number of partners involved in Fe-S cluster assembly, tRNA modification or cofactor biosynthesis. Catalyzes the removal of elemental sulfur atoms from cysteine to produce alanine. Functions as a sulfur delivery protein for Fe-S cluster synthesis onto IscU, an Fe-S scaffold assembly protein, as well as other S acceptor proteins. In Pseudomonas fluorescens (strain ATCC BAA-477 / NRRL B-23932 / Pf-5), this protein is Cysteine desulfurase IscS.